The chain runs to 181 residues: Sporozoite-associated mosquito saliva protein 1 (181 aa).

A signal peptide spans 1-24 (MNSSWRVVVFLGLVILCHSRRARA).

In terms of tissue distribution, salivary gland (at protein level). As to expression, (Microbial infection) Detected with Plasmodium berghei sporozoites isolated from the saliva of infected Anopheles gambiae mosquitoes (at protein level).

It localises to the secreted. Its function is as follows. Decreases host neutrophil chemotaxis induced by N-formylmethionine-leucyl-phenylalanine (fMLP). Functionally, (Microbial infection) Interacts with the surface of Plasmodium berghei sporozoites. Enhances sporozoite gliding activity. Enhances host hepatocyte traversal by sporozoites. This is Sporozoite-associated mosquito saliva protein 1 from Anopheles gambiae (African malaria mosquito).